The primary structure comprises 364 residues: tRNA/tmRNA (uracil-C(5))-methyltransferase (364 aa).

5 residues coordinate S-adenosyl-L-methionine: Gln188, Tyr216, Asn221, Glu237, and Asp297. Cys322 acts as the Nucleophile in catalysis. Glu356 serves as the catalytic Proton acceptor.

Belongs to the class I-like SAM-binding methyltransferase superfamily. RNA M5U methyltransferase family. TrmA subfamily.

The catalysed reaction is uridine(54) in tRNA + S-adenosyl-L-methionine = 5-methyluridine(54) in tRNA + S-adenosyl-L-homocysteine + H(+). The enzyme catalyses uridine(341) in tmRNA + S-adenosyl-L-methionine = 5-methyluridine(341) in tmRNA + S-adenosyl-L-homocysteine + H(+). Functionally, dual-specificity methyltransferase that catalyzes the formation of 5-methyluridine at position 54 (m5U54) in all tRNAs, and that of position 341 (m5U341) in tmRNA (transfer-mRNA). In Colwellia psychrerythraea (strain 34H / ATCC BAA-681) (Vibrio psychroerythus), this protein is tRNA/tmRNA (uracil-C(5))-methyltransferase.